A 130-amino-acid chain; its full sequence is Small ribosomal subunit protein uS9 (130 aa).

This sequence belongs to the universal ribosomal protein uS9 family.

This Clostridium perfringens (strain ATCC 13124 / DSM 756 / JCM 1290 / NCIMB 6125 / NCTC 8237 / Type A) protein is Small ribosomal subunit protein uS9.